A 169-amino-acid chain; its full sequence is Probable glutathione peroxidase 2 (169 aa).

Residue Cys41 is part of the active site.

Belongs to the glutathione peroxidase family. As to quaternary structure, interacts with DJ1A. As to expression, expressed in leaves, stems, flowers, green siliques and roots.

It localises to the cytoplasm. The protein localises to the cytosol. Its subcellular location is the nucleus. The catalysed reaction is 2 glutathione + H2O2 = glutathione disulfide + 2 H2O. May constitute a glutathione peroxidase-like protective system against oxidative stresses. The protein is Probable glutathione peroxidase 2 (GPX2) of Arabidopsis thaliana (Mouse-ear cress).